A 262-amino-acid polypeptide reads, in one-letter code: Hydroxyethylthiazole kinase (262 aa).

Methionine 50 is a substrate binding site. Arginine 125 and threonine 171 together coordinate ATP. Glycine 198 serves as a coordination point for substrate.

The protein belongs to the Thz kinase family. Mg(2+) serves as cofactor.

It catalyses the reaction 5-(2-hydroxyethyl)-4-methylthiazole + ATP = 4-methyl-5-(2-phosphooxyethyl)-thiazole + ADP + H(+). It participates in cofactor biosynthesis; thiamine diphosphate biosynthesis; 4-methyl-5-(2-phosphoethyl)-thiazole from 5-(2-hydroxyethyl)-4-methylthiazole: step 1/1. Its function is as follows. Catalyzes the phosphorylation of the hydroxyl group of 4-methyl-5-beta-hydroxyethylthiazole (THZ). The protein is Hydroxyethylthiazole kinase of Shigella boydii serotype 4 (strain Sb227).